The sequence spans 251 residues: Insulin-induced gene 1 protein (251 aa).

The Cytoplasmic segment spans residues 1–58 (MQTLEEHCWSCSCTRGRDKKGTKVSAWLARRVGKAMSSLNSLLSLAYSTLASSEGRSL). Residues 59-81 (IQRSLVLFTVGVFLALVLNLLQI) traverse the membrane as a helical segment. At 82–100 (QRNVTLFPEEVIATIFSSA) the chain is on the extracellular side. Residues 101–118 (WWVPPCCGTAAAVVGLLY) form a helical membrane-spanning segment. Residues 119 to 133 (PCIDSRIGEPHKFKR) lie on the Cytoplasmic side of the membrane. A helical membrane pass occupies residues 134 to 156 (EWASVMRCIAVFVGINHASAKLD). Topologically, residues 157 to 159 (FAN) are extracellular. The helical transmembrane segment at 160–178 (NVQLSLTLAALSLGLWWTF) threads the bilayer. Over 179 to 183 (DRSRS) the chain is Cytoplasmic. Residues 184-205 (GLGLGITIAFLATLITQFLVYN) traverse the membrane as a helical segment. Topologically, residues 206 to 219 (GVYQYTSPDFLYIR) are extracellular. The helical transmembrane segment at 220–237 (SWLPCIFFSGGVTVGNIG) threads the bilayer. The Cytoplasmic segment spans residues 238-251 (RQLAMGSSEKTHGD). The short motif at 245–251 (SEKTHGD) is the KxHxx element.

This sequence belongs to the INSIG family. As to quaternary structure, interacts with scap; interaction is direct and only takes place in the presence of sterols; it prevents interaction between scap and the coat protein complex II (COPII). Associates with the SCAP-SREBP complex; association is mediated via its interaction with scap and only takes place in the presence of sterols.

Its subcellular location is the endoplasmic reticulum membrane. In terms of biological role, oxysterol-binding protein that mediates feedback control of cholesterol synthesis by controlling both endoplasmic reticulum to Golgi transport of scap and degradation of hmgcr. Acts as a negative regulator of cholesterol biosynthesis by mediating the retention of the SCAP-SREBP complex in the endoplasmic reticulum, thereby blocking the processing of sterol regulatory element-binding proteins (SREBPs). Binds oxysterol, including 25-hydroxycholesterol, regulating interaction with scap and retention of the SCAP-SREBP complex in the endoplasmic reticulum. In presence of oxysterol, interacts with scap, retaining the SCAP-SREBP complex in the endoplasmic reticulum, thereby preventing scap from escorting SREBPs to the Golgi. Sterol deprivation reduces oxysterol-binding, disrupting the interaction between insig1 and scap, thereby promoting Golgi transport of the SCAP-SREBP complex, followed by processing and nuclear translocation of SREBPs. Also regulates cholesterol synthesis by regulating degradation of hmgcr. This Xenopus laevis (African clawed frog) protein is Insulin-induced gene 1 protein.